Reading from the N-terminus, the 168-residue chain is Photosystem I assembly protein Ycf3 (168 aa).

TPR repeat units follow at residues 35–68 (AFTYYRDGMSAQSEGNYAEALQNYYEAMRLEIDP), 72–105 (SYILYNIGLIHTSNGEHTKALEYYFRALERNPFL), and 120–153 (GEQAIQQGDSEIAEAWFDQAAEYWKQAIALTPGN).

It belongs to the Ycf3 family.

The protein resides in the plastid. It localises to the chloroplast thylakoid membrane. Its function is as follows. Essential for the assembly of the photosystem I (PSI) complex. May act as a chaperone-like factor to guide the assembly of the PSI subunits. The polypeptide is Photosystem I assembly protein Ycf3 (Solanum bulbocastanum (Wild potato)).